The primary structure comprises 382 residues: Draxin-A (382 aa).

Positions 1 to 22 are cleaved as a signal peptide; that stretch reads MMSSSWCLPLALLFSTLAVSHS. Disordered stretches follow at residues 28–213, 233–252, and 275–297; these read THAK…PPSP, LPTLPPASTKPQKSGRGKMQ, and VDAWPSSRKKDKRRSKNLSSGNV. A compositionally biased stretch (low complexity) spans 73–82; that stretch reads RGAKASSGAG. The span at 139-149 shows a compositional bias: basic residues; it reads GPRKGRGQGHG. Residues 190 to 201 show a composition bias toward low complexity; that stretch reads SVSSAAAATSPS. Positions 281–290 are enriched in basic residues; the sequence is SRKKDKRRSK. Residues N291 and N296 are each glycosylated (N-linked (GlcNAc...) asparagine).

This sequence belongs to the draxin family.

It localises to the secreted. Its function is as follows. Chemorepulsive axon guidance protein required for the development of spinal cord and forebrain commissures. Acts as a chemorepulsive guidance protein for commissural axons during development. Able to inhibit or repel neurite outgrowth from dorsal spinal cord. The sequence is that of Draxin-A (draxin-A) from Salmo salar (Atlantic salmon).